A 164-amino-acid polypeptide reads, in one-letter code: DNA-directed RNA polymerase 19 kDa subunit (164 aa).

Positions 1–35 (MADTDDIIDYESDDLTEYEDDEEEEEDGESLETSD) are enriched in acidic residues. A disordered region spans residues 1–39 (MADTDDIIDYESDDLTEYEDDEEEEEDGESLETSDIDPK).

It belongs to the poxviridae DNA-directed RNA polymerase 19 kDa subunit family. In terms of assembly, the DNA-dependent RNA polymerase used for intermediate and late genes expression consists of eight subunits Rpo30/OPG66, Rpo7/OPG90, Rpo22/OPG103, Rpo147/OPG105, Rpo18/OPG119, Rpo19/OPG131, Rpo132/OPG151 and Rpo35/OPG156. The same holoenzyme, with the addition of the transcription-specificity factor OPG109, is used for early gene expression.

The protein resides in the virion. It catalyses the reaction RNA(n) + a ribonucleoside 5'-triphosphate = RNA(n+1) + diphosphate. In terms of biological role, part of the DNA-dependent RNA polymerase which catalyzes the transcription of viral DNA into RNA using the four ribonucleoside triphosphates as substrates. Responsible for the transcription of early, intermediate and late genes. DNA-dependent RNA polymerase associates with the early transcription factor (ETF), itself composed of OPG118 and OPG133, thereby allowing the early genes transcription. Late transcription, and probably also intermediate transcription, require newly synthesized RNA polymerase. The protein is DNA-directed RNA polymerase 19 kDa subunit (OPG131) of Homo sapiens (Human).